The sequence spans 68 residues: Conotoxin G1.9 (68 aa).

The first 21 residues, 1–21, serve as a signal peptide directing secretion; it reads MGMRMMFTVFLLVVLATTVVS. Positions 22-44 are excised as a propeptide; it reads FTSRRGPKSRRGEPVPTTVINYG. 2 cysteine pairs are disulfide-bonded: Cys46/Cys52 and Cys47/Cys61.

Belongs to the conotoxin A superfamily. Expressed by the venom duct.

The protein resides in the secreted. In terms of biological role, does not show activity on all the human nAChR subtypes studied. The sequence is that of Conotoxin G1.9 from Conus geographus (Geography cone).